Reading from the N-terminus, the 190-residue chain is Vexin (190 aa).

The interval 88–156 is disordered; the sequence is AEKKASRFSR…DEATLPLTAH (69 aa). The span at 117 to 133 shows a compositional bias: polar residues; sequence TDKQNAPTVPASPSSYE. Residues 136–149 are compositionally biased toward basic and acidic residues; sequence GCREQRPENPKDEA.

The protein belongs to the vexin family. As to expression, expressed in differentiating progenitors in the developing central nervous system (CNS).

It localises to the cell membrane. The protein resides in the nucleus. Functionally, required for neurogenesis in the neural plate and retina. Cooperates with cell cycle inhibitor cdknx/p27(xic1) to enhance neurogenesis and increase the levels of the neuronal determination factor neurog2/X-ngngr-1. This is Vexin from Xenopus laevis (African clawed frog).